We begin with the raw amino-acid sequence, 307 residues long: Ribosomal protein uL3 glutamine methyltransferase (307 aa).

This sequence belongs to the protein N5-glutamine methyltransferase family. PrmB subfamily.

The enzyme catalyses L-glutaminyl-[ribosomal protein uL3] + S-adenosyl-L-methionine = N(5)-methyl-L-glutaminyl-[ribosomal protein uL3] + S-adenosyl-L-homocysteine + H(+). Functionally, methylates large ribosomal subunit protein uL3 on a specific glutamine residue. The polypeptide is Ribosomal protein uL3 glutamine methyltransferase (Burkholderia pseudomallei (strain K96243)).